The primary structure comprises 67 residues: UPF0253 protein VS_2370 (67 aa).

The protein belongs to the UPF0253 family.

This chain is UPF0253 protein VS_2370, found in Vibrio atlanticus (strain LGP32) (Vibrio splendidus (strain Mel32)).